Consider the following 398-residue polypeptide: MSISKSLVLNEIKKFSPSHIIIGYSGGVDSSVLLNISKELDIPLIAIYINHNLHRDSLKWQIHCQQTCQKYNLQFISHSLDKVPKGESFEAWASKQRMAFFQKIMQQYSKPLLLLGHHQDDQAETFLIQAIRGSGLAGLAGIPHYKELHHGGVLRPLLKYSKIEIEGFAKLNNISYIYDDSNEDIKYRRNLIRNQIIPILQQVNPNISQTLSRSANICAESNNILQKLLTERLQSISQDTNLIISELIKLDDDIQKNLLHLWFKQNTQQSLKSKQIKELHLAVNNPSTGWQIDISNYYQIHIQYNQLIIKYPTTINDISKEDIISWLSKNLNEEIDLTKIVIRDRKPDDKCKYRGRNKPNKLKILFQELQIPTTERSKAKIILKDQQIIAVYPFFICG.

25-30 (SGGVDS) serves as a coordination point for ATP.

This sequence belongs to the tRNA(Ile)-lysidine synthase family.

The protein localises to the cytoplasm. It carries out the reaction cytidine(34) in tRNA(Ile2) + L-lysine + ATP = lysidine(34) in tRNA(Ile2) + AMP + diphosphate + H(+). In terms of biological role, ligates lysine onto the cytidine present at position 34 of the AUA codon-specific tRNA(Ile) that contains the anticodon CAU, in an ATP-dependent manner. Cytidine is converted to lysidine, thus changing the amino acid specificity of the tRNA from methionine to isoleucine. The sequence is that of tRNA(Ile)-lysidine synthase from Francisella tularensis subsp. tularensis (strain SCHU S4 / Schu 4).